A 195-amino-acid polypeptide reads, in one-letter code: Guanylate kinase (195 aa).

The 180-residue stretch at 12–191 folds into the Guanylate kinase-like domain; sequence GLIILISGPS…TIEDIKQLIL (180 aa). ATP is bound at residue 19–26; it reads GPSGVGKG.

Belongs to the guanylate kinase family.

It is found in the cytoplasm. It carries out the reaction GMP + ATP = GDP + ADP. Essential for recycling GMP and indirectly, cGMP. This is Guanylate kinase (gmk) from Mycoplasmoides gallisepticum (strain R(low / passage 15 / clone 2)) (Mycoplasma gallisepticum).